A 375-amino-acid polypeptide reads, in one-letter code: Probable UDP-N-acetylglucosamine 2-epimerase (375 aa).

This sequence belongs to the UDP-N-acetylglucosamine 2-epimerase family.

It localises to the cytoplasm. The enzyme catalyses UDP-N-acetyl-alpha-D-glucosamine = UDP-N-acetyl-alpha-D-mannosamine. It functions in the pathway glycan metabolism; exopolysaccharide EPS I biosynthesis. Functionally, may be involved in synthesis of N-acetyltrideoxygalactose, a component of exopolysaccharide EPS I which functions as a virulence factor. In Ralstonia nicotianae (strain ATCC BAA-1114 / GMI1000) (Ralstonia solanacearum), this protein is Probable UDP-N-acetylglucosamine 2-epimerase (epsC).